The sequence spans 189 residues: dCTP deaminase (189 aa).

DCTP is bound by residues 112-117, 136-138, Q157, Y171, and Q181; these read KSTYAR and TLE. Residue E138 is the Proton donor/acceptor of the active site.

Belongs to the dCTP deaminase family. As to quaternary structure, homotrimer.

It carries out the reaction dCTP + H2O + H(+) = dUTP + NH4(+). It participates in pyrimidine metabolism; dUMP biosynthesis; dUMP from dCTP (dUTP route): step 1/2. Its function is as follows. Catalyzes the deamination of dCTP to dUTP. The polypeptide is dCTP deaminase (Acinetobacter baylyi (strain ATCC 33305 / BD413 / ADP1)).